An 835-amino-acid polypeptide reads, in one-letter code: Protein translocase subunit SecA (835 aa).

ATP contacts are provided by residues glutamine 85, 103 to 107 (GEGKT), and aspartate 492. Residues 788–807 (VQGEAVHPSSDGEEAKKKPV) form a disordered region. Cysteine 819, cysteine 821, cysteine 830, and cysteine 831 together coordinate Zn(2+).

This sequence belongs to the SecA family. As to quaternary structure, monomer and homodimer. Part of the essential Sec protein translocation apparatus which comprises SecA, SecYEG and auxiliary proteins SecDF. Other proteins may also be involved. Zn(2+) serves as cofactor.

It is found in the cell membrane. The protein localises to the cytoplasm. It carries out the reaction ATP + H2O + cellular proteinSide 1 = ADP + phosphate + cellular proteinSide 2.. In terms of biological role, part of the Sec protein translocase complex. Interacts with the SecYEG preprotein conducting channel. Has a central role in coupling the hydrolysis of ATP to the transfer of proteins into and across the cell membrane, serving as an ATP-driven molecular motor driving the stepwise translocation of polypeptide chains across the membrane. In Bacillus cereus (strain ATCC 14579 / DSM 31 / CCUG 7414 / JCM 2152 / NBRC 15305 / NCIMB 9373 / NCTC 2599 / NRRL B-3711), this protein is Protein translocase subunit SecA.